The chain runs to 656 residues: Translation factor GUF1 homolog, mitochondrial (656 aa).

Residues glutamine 55 to aspartate 236 form the tr-type G domain. Residues alanine 64–serine 71, aspartate 129–histidine 133, and asparagine 183–aspartate 186 contribute to the GTP site.

The protein belongs to the TRAFAC class translation factor GTPase superfamily. Classic translation factor GTPase family. LepA subfamily.

It is found in the mitochondrion inner membrane. The enzyme catalyses GTP + H2O = GDP + phosphate + H(+). Functionally, promotes mitochondrial protein synthesis. May act as a fidelity factor of the translation reaction, by catalyzing a one-codon backward translocation of tRNAs on improperly translocated ribosomes. Binds to mitochondrial ribosomes in a GTP-dependent manner. This Aedes aegypti (Yellowfever mosquito) protein is Translation factor GUF1 homolog, mitochondrial.